The chain runs to 585 residues: Bifunctional lycopene cyclase/phytoene synthase (585 aa).

The lycopene beta-cyclase stretch occupies residues 1-243 (MGFDYAIVHV…IVFGQLAFDN (243 aa)). Helical transmembrane passes span 3–23 (FDYA…LTLL), 35–55 (KVLF…SYLI), 75–97 (IPLE…YLIL), 123–141 (LAGQ…LRVH), 151–171 (LIVV…YQFI), 173–193 (GLPW…LWLV), and 221–241 (IEEA…QLAF). A phytoene synthase region spans residues 250 to 585 (TFPALFPKPP…AWRTLNKSIA (336 aa)).

This sequence in the N-terminal section; belongs to the lycopene beta-cyclase family. The protein in the C-terminal section; belongs to the phytoene/squalene synthase family.

Its subcellular location is the membrane. The catalysed reaction is all-trans-lycopene = gamma-carotene. It carries out the reaction gamma-carotene = all-trans-beta-carotene. It catalyses the reaction 2 (2E,6E,10E)-geranylgeranyl diphosphate = 15-cis-phytoene + 2 diphosphate. It functions in the pathway carotenoid biosynthesis; beta-carotene biosynthesis. Its pathway is carotenoid biosynthesis; phytoene biosynthesis; all-trans-phytoene from geranylgeranyl diphosphate: step 1/1. Bifunctional enzyme that catalyzes the reactions from geranylgeranyl diphosphate to phytoene (phytoene synthase) and lycopene to beta-carotene via the intermediate gamma-carotene (lycopene cyclase). The sequence is that of Bifunctional lycopene cyclase/phytoene synthase from Phaeosphaeria nodorum (strain SN15 / ATCC MYA-4574 / FGSC 10173) (Glume blotch fungus).